The following is a 1006-amino-acid chain: SAC3 family protein A (1006 aa).

Disordered regions lie at residues 1–75 (MNHG…GPAT), 106–162 (TPYQ…PGSY), 183–239 (GYQS…TIAT), 266–326 (GTEK…AVST), 516–550 (TVTT…RWEP), 595–638 (GFKP…SDKD), and 650–690 (AGSA…GNLH). Polar residues-rich tracts occupy residues 26–75 (GSQT…GPAT) and 106–115 (TPYQTSSDPH). Residues 116 to 140 (NYSNTGYSNYYSGYQQQPSQSYPQP) show a composition bias toward low complexity. Over residues 144–162 (YQNTGAPQPLSSFQNPGSY) the composition is skewed to polar residues. Polar residues-rich tracts occupy residues 269-282 (KLST…SQSF) and 313-326 (SHPP…AVST). Residues 516–539 (TVTTTNVTNSESSSAQLSSLQNKS) show a composition bias toward low complexity. Residues 609–618 (SFQRPVKRQR) show a composition bias toward basic residues. The span at 653–680 (AEEKKRRDSRSKRFEKIQGHSRGNDLTK) shows a compositional bias: basic and acidic residues. The PCI domain maps to 804–978 (DLPEYNQCLS…DMLLDTKATS (175 aa)).

The protein belongs to the SAC3 family. Interacts with EER5, SAC3B and CML20.

The protein localises to the nucleus. Component of the TREX-2 complex (transcription and export complex 2), a muliprotein complex that functions in docking export-competent ribonucleoprotein particles (mRNPs) to the nuclear entrance of the nuclear pore complex (nuclear basket). TREX-2 participates in mRNA export and accurate chromatin positioning in the nucleus by tethering genes to the nuclear periphery. This is SAC3 family protein A from Arabidopsis thaliana (Mouse-ear cress).